A 263-amino-acid polypeptide reads, in one-letter code: Protein MARD1 (263 aa).

An FLZ-type zinc finger spans residues 219 to 263 (SFLSRCFTCKKNLDQKQDIYIYRGEKGFCSSECRYQEMLLDQMET).

Belongs to the FLZ family. Interacts with KIN10 and KIN11 via its FLZ-type zinc finger domain. Interacts with KINB1 and KINB2 via its N-terminal part. Interacts with TZF4, TZF5 and TZF6. Interacts with MPK3 and MPK6.

Its subcellular location is the cytoplasm. It localises to the stress granule. The protein localises to the P-body. In terms of biological role, may act as an adapter to facilitate the interaction of SnRK1 complex with effector proteins, conferring tissue- and stimulus-type specific differences in the SnRK1 regulation pathway. Involved in seed dormancy control. The chain is Protein MARD1 from Arabidopsis thaliana (Mouse-ear cress).